The following is a 622-amino-acid chain: Palmitoyltransferase ZDHHC13 (622 aa).

Residue Met-1 is modified to N-acetylmethionine. The Cytoplasmic portion of the chain corresponds to 1 to 291 (MEGPGLGSQC…RLWRWLQKCE (291 aa)). ANK repeat units follow at residues 43-78 (PLIE…VRQP), 81-110 (ENVS…VVDQ), 115-144 (LNST…DPTL), 148-177 (EGFS…SVNM), 181-211 (NGQT…SLNV), 216-245 (HQNT…SLDI), and 249-277 (KGET…KMRA). A helical transmembrane segment spans residues 292-312 (LFLLLMLSVITMWAVGYILDF). The Lumenal portion of the chain corresponds to 313 to 320 (NSDSWLLK). The helical transmembrane segment at 321–341 (GCLLVTLFFLTSLFPRFLVGY) threads the bilayer. The Cytoplasmic segment spans residues 342–347 (KNLVYL). A helical transmembrane segment spans residues 348–368 (PTAFLLSSVFWIFMTWFILFF). Topologically, residues 369–370 (PD) are lumenal. The chain crosses the membrane as a helical span at residues 371–391 (LAGAPFYFSFIFSIVAFLYFF). Residues 392–470 (YKTWATDPGF…RCIGFGNHHY (79 aa)) lie on the Cytoplasmic side of the membrane. Positions 426–476 (TFCTSCLIRKPLRSLHCHVCNSCVARYDQHCLWTGRCIGFGNHHYYIFFLF) constitute a DHHC domain. Catalysis depends on Cys-456, which acts as the S-palmitoyl cysteine intermediate. A helical membrane pass occupies residues 471–491 (YIFFLFFLSMVCGWIIYGSFI). Over 492-518 (YWSSHCATTFKEDGLWTYLNQIVACSP) the chain is Lumenal. A helical membrane pass occupies residues 519-539 (WVLYILMLATFHFSWSTFLLL). Over 540 to 622 (NQLFQIAFLG…PAREKVLRSV (83 aa)) the chain is Cytoplasmic.

Belongs to the DHHC palmitoyltransferase family. AKR/ZDHHC17 subfamily. In terms of assembly, interacts (via ANK repeats) with CLIP3. Interacts (via ANK repeats) with DNAJC5 (via C-terminus). Interacts (via ANK repeats) with HTT. Interacts (via ANK repeats) with MAP6. Interacts (via ANK repeats) with SNAP23. Interacts (via ANK repeats) with SNAP25. May interact (via ANK repeats) with SPRED2.

It localises to the golgi apparatus membrane. It is found in the cytoplasmic vesicle membrane. It carries out the reaction L-cysteinyl-[protein] + hexadecanoyl-CoA = S-hexadecanoyl-L-cysteinyl-[protein] + CoA. In terms of biological role, palmitoyltransferase that could catalyze the addition of palmitate onto various protein substrates. Palmitoyltransferase for HTT and GAD2. May play a role in Mg(2+) transport. The polypeptide is Palmitoyltransferase ZDHHC13 (Pongo abelii (Sumatran orangutan)).